Reading from the N-terminus, the 930-residue chain is Translation initiation factor IF-2 (930 aa).

A compositionally biased stretch (low complexity) spans 50-67 (FKPAAAPKVEAKPAAPKV). 2 disordered regions span residues 50–217 (FKPA…SSEE) and 260–346 (EVVP…HELP). Composition is skewed to basic and acidic residues over residues 68–90 (SAEKKAEKSEPAKPAVAKEEAKP) and 110–125 (FKAEREARAKEQAERR). Residues 129–141 (KGNNRDQQQNGNR) are compositionally biased toward low complexity. 2 stretches are compositionally biased toward basic and acidic residues: residues 157 to 167 (RDNRRFNDQAK) and 262 to 295 (VPEKKEPAVDTRRKKQARPDKNRDDYDHEEDGPR). Low complexity predominate over residues 309 to 318 (NQKNSNWNNN). Over residues 337–346 (VTERKFHELP) the composition is skewed to basic and acidic residues. One can recognise a tr-type G domain in the interval 432–599 (ERPPVVTIMG…TVLLVAEIQE (168 aa)). Residues 441–448 (GHVDHGKT) form a G1 region. 441–448 (GHVDHGKT) contacts GTP. The G2 stretch occupies residues 466–470 (GITQH). Residues 487 to 490 (DTPG) are G3. GTP contacts are provided by residues 487–491 (DTPGH) and 541–544 (NKID). Positions 541–544 (NKID) are G4. Residues 577-579 (SAK) form a G5 region.

Belongs to the TRAFAC class translation factor GTPase superfamily. Classic translation factor GTPase family. IF-2 subfamily.

It localises to the cytoplasm. One of the essential components for the initiation of protein synthesis. Protects formylmethionyl-tRNA from spontaneous hydrolysis and promotes its binding to the 30S ribosomal subunits. Also involved in the hydrolysis of GTP during the formation of the 70S ribosomal complex. The protein is Translation initiation factor IF-2 of Streptococcus pneumoniae (strain Taiwan19F-14).